The primary structure comprises 391 residues: Phosphoglycerate kinase (391 aa).

Substrate is bound by residues Asp-19 to Asn-21, Arg-35, His-58 to Arg-61, Arg-117, and Arg-150. Residues Lys-201, Glu-323, and Gly-349–Thr-352 contribute to the ATP site.

The protein belongs to the phosphoglycerate kinase family. As to quaternary structure, monomer.

The protein localises to the cytoplasm. It catalyses the reaction (2R)-3-phosphoglycerate + ATP = (2R)-3-phospho-glyceroyl phosphate + ADP. Its pathway is carbohydrate degradation; glycolysis; pyruvate from D-glyceraldehyde 3-phosphate: step 2/5. The protein is Phosphoglycerate kinase of Desulforapulum autotrophicum (strain ATCC 43914 / DSM 3382 / VKM B-1955 / HRM2) (Desulfobacterium autotrophicum).